The chain runs to 1187 residues: Nucleolar protein 6 (1187 aa).

Positions Met1–Ala20 are enriched in basic and acidic residues. Disordered regions lie at residues Met1–Pro64 and Arg1134–Cys1187.

Belongs to the NRAP family. Part of the small subunit (SSU) processome, composed of more than 70 proteins and the RNA chaperone small nucleolar RNA (snoRNA) U3.

It is found in the nucleus. Its subcellular location is the nucleolus. The protein resides in the chromosome. Its function is as follows. Part of the small subunit (SSU) processome, first precursor of the small eukaryotic ribosomal subunit. During the assembly of the SSU processome in the nucleolus, many ribosome biogenesis factors, an RNA chaperone and ribosomal proteins associate with the nascent pre-rRNA and work in concert to generate RNA folding, modifications, rearrangements and cleavage as well as targeted degradation of pre-ribosomal RNA by the RNA exosome. The sequence is that of Nucleolar protein 6 from Drosophila mojavensis (Fruit fly).